A 329-amino-acid polypeptide reads, in one-letter code: Isopenicillin N synthase (329 aa).

Residues arginine 87, tyrosine 91, serine 183, and tyrosine 189 each coordinate isopenicillin N. Residues arginine 87, tyrosine 91, serine 183, tyrosine 189, histidine 212, and aspartate 214 each coordinate N-[(5S)-5-amino-5-carboxypentanoyl]-L-cysteinyl-D-valine. The 107-residue stretch at 180-286 folds into the Fe2OG dioxygenase domain; that stretch reads SLSSVSLIRY…RLSLPFFLNG (107 aa). Fe(2+)-binding residues include histidine 212, aspartate 214, and histidine 268. 2-oxoglutarate is bound at residue arginine 277. Position 279 (serine 279) interacts with isopenicillin N. N-[(5S)-5-amino-5-carboxypentanoyl]-L-cysteinyl-D-valine is bound at residue serine 279.

This sequence belongs to the iron/ascorbate-dependent oxidoreductase family. Requires Fe cation as cofactor. L-ascorbate is required as a cofactor.

The enzyme catalyses N-[(5S)-5-amino-5-carboxypentanoyl]-L-cysteinyl-D-valine + O2 = isopenicillin N + 2 H2O. Its pathway is antibiotic biosynthesis; penicillin G biosynthesis; penicillin G from L-alpha-aminoadipate and L-cysteine and L-valine: step 2/3. In terms of biological role, removes, in the presence of oxygen, 4 hydrogen atoms from delta-L-(alpha-aminoadipyl)-L-cysteinyl-D-valine (ACV) to form the azetidinone and thiazolidine rings of isopenicillin. The sequence is that of Isopenicillin N synthase (pcbC) from Streptomyces clavuligerus.